Reading from the N-terminus, the 241-residue chain is MKKIFAANWKLFKSPKETREFFGQFKELAGKATGEVVFFPSAISLEAASESLKGTSIKFGAQNCYFQAQGAFTGENSAQVVKDLGGSYVLIGHSERRAIFGEGDALVADKVAFVQGLGLTPMLCIGETLQERESAKTFRVLETQLNLGLAKADKTKPVVVAYEPVWAIGTGKVATPEQVAETHTDVFNILKALGFETAPILYGGSVKPDNAAGLIKQPHVNGFLVGGASLEAKSFSEIASV.

8-10 (NWK) serves as a coordination point for substrate. His93 acts as the Electrophile in catalysis. Residue Glu163 is the Proton acceptor of the active site. Residues Gly169, Ser205, and 226–227 (GG) contribute to the substrate site.

This sequence belongs to the triosephosphate isomerase family. In terms of assembly, homodimer.

The protein localises to the cytoplasm. The catalysed reaction is D-glyceraldehyde 3-phosphate = dihydroxyacetone phosphate. Its pathway is carbohydrate biosynthesis; gluconeogenesis. It participates in carbohydrate degradation; glycolysis; D-glyceraldehyde 3-phosphate from glycerone phosphate: step 1/1. Functionally, involved in the gluconeogenesis. Catalyzes stereospecifically the conversion of dihydroxyacetone phosphate (DHAP) to D-glyceraldehyde-3-phosphate (G3P). This chain is Triosephosphate isomerase, found in Bdellovibrio bacteriovorus (strain ATCC 15356 / DSM 50701 / NCIMB 9529 / HD100).